Consider the following 140-residue polypeptide: ATP synthase epsilon chain (140 aa).

It belongs to the ATPase epsilon chain family. F-type ATPases have 2 components, CF(1) - the catalytic core - and CF(0) - the membrane proton channel. CF(1) has five subunits: alpha(3), beta(3), gamma(1), delta(1), epsilon(1). CF(0) has three main subunits: a, b and c.

The protein localises to the cell inner membrane. Functionally, produces ATP from ADP in the presence of a proton gradient across the membrane. This is ATP synthase epsilon chain from Nitrosomonas eutropha (strain DSM 101675 / C91 / Nm57).